A 200-amino-acid polypeptide reads, in one-letter code: Rho-related protein racH (200 aa).

11 to 18 (GDMSVGKT) provides a ligand contact to GTP. The short motif at 33–41 (YVPTVFDNY) is the Effector region element. GTP contacts are provided by residues 58-62 (DTAGS) and 117-120 (TKLD). Positions 178–200 (EELAKSKKDSKKGDKDSKDCIIQ) are disordered. Cys197 carries the post-translational modification Cysteine methyl ester. The S-geranylgeranyl cysteine moiety is linked to residue Cys197. Residues 198–200 (IIQ) constitute a propeptide, removed in mature form.

Belongs to the small GTPase superfamily. Rho family.

It localises to the cell membrane. This Dictyostelium discoideum (Social amoeba) protein is Rho-related protein racH (racH).